The sequence spans 385 residues: Cytochrome b (385 aa).

The next 4 helical transmembrane spans lie at 32–52, 76–98, 113–133, and 179–199; these read FGSL…TLAM, WLIR…LHIG, AWIL…LGYV, and FFAL…MHLI. The heme b site is built by histidine 82 and histidine 96. Heme b contacts are provided by histidine 183 and histidine 197. Position 202 (histidine 202) interacts with a ubiquinone. Helical transmembrane passes span 226–246, 290–310, 322–342, and 349–369; these read YLFK…IFVF, LLGV…PKTD, LSKI…QLGA, and FIEF…IIMP.

The protein belongs to the cytochrome b family. Fungal cytochrome b-c1 complex contains 10 subunits; 3 respiratory subunits, 2 core proteins and 5 low-molecular weight proteins. Cytochrome b-c1 complex is a homodimer. The cofactor is heme b.

The protein resides in the mitochondrion inner membrane. Component of the ubiquinol-cytochrome c reductase complex (complex III or cytochrome b-c1 complex) that is part of the mitochondrial respiratory chain. The b-c1 complex mediates electron transfer from ubiquinol to cytochrome c. Contributes to the generation of a proton gradient across the mitochondrial membrane that is then used for ATP synthesis. This is Cytochrome b (cob) from Akanthomyces muscarius (Entomopathogenic fungus).